Consider the following 191-residue polypeptide: UPF0149 protein VCM66_2399 (191 aa).

The protein belongs to the UPF0149 family.

This is UPF0149 protein VCM66_2399 from Vibrio cholerae serotype O1 (strain M66-2).